The sequence spans 464 residues: MLPVIALVGRPNVGKSTLFNQLTRSRDALVADFPGLTRDRQYGPGRVGGFPYMVVDTGGLSGEAETLDNLMARQTQQAIDESDVVLFLVDGREGLTAADQAIARSLRTQGKKVLLVVNKTDGVDADQAMAEFHALGFGAPIPIAATHGRGVLGLMNAVHALLPEVEEIQAEAERWPGIRIAFVGRPNAGKSTLINRILGEERVVATEIPGTTRDSIFIPFERDGQQYTLIDTAGVRRRSRVHEAIEKFSVVKTLQAIDAAHVVVMVLDAREGISEQDAHLLGVVLDAGRALVVAINKWDGLDPDQRDRIRHELDLKLPFLDFAEKRFISALHGTGVGDLFAHVKRAYDSAFIKVSTNHLTKLLESAMVAHQPPLVSGRRVKLRYAHQGGQNPPIIVIHGNMTERLPGSYKRYLSNHFRQHLKLVGTPIRLEFKTGENPYAGKRNVLTPRQQYKRKRMMRHAKKK.

EngA-type G domains lie at 3–166 (PVIA…PEVE) and 178–351 (IRIA…DSAF). GTP is bound by residues 9–16 (GRPNVGKS), 56–60 (DTGGL), 118–121 (NKTD), 184–191 (GRPNAGKS), 231–235 (DTAGV), and 296–299 (NKWD). The region spanning 352 to 436 (IKVSTNHLTK…PIRLEFKTGE (85 aa)) is the KH-like domain.

This sequence belongs to the TRAFAC class TrmE-Era-EngA-EngB-Septin-like GTPase superfamily. EngA (Der) GTPase family. Associates with the 50S ribosomal subunit.

Its function is as follows. GTPase that plays an essential role in the late steps of ribosome biogenesis. The sequence is that of GTPase Der from Thioalkalivibrio sulfidiphilus (strain HL-EbGR7).